We begin with the raw amino-acid sequence, 334 residues long: Phenylalanine--tRNA ligase alpha subunit (334 aa).

Glu-249 serves as a coordination point for Mg(2+).

Belongs to the class-II aminoacyl-tRNA synthetase family. Phe-tRNA synthetase alpha subunit type 1 subfamily. In terms of assembly, tetramer of two alpha and two beta subunits. It depends on Mg(2+) as a cofactor.

The protein localises to the cytoplasm. It carries out the reaction tRNA(Phe) + L-phenylalanine + ATP = L-phenylalanyl-tRNA(Phe) + AMP + diphosphate + H(+). This chain is Phenylalanine--tRNA ligase alpha subunit, found in Desulfatibacillum aliphaticivorans.